The primary structure comprises 206 residues: Adenine phosphoribosyltransferase (206 aa).

This sequence belongs to the purine/pyrimidine phosphoribosyltransferase family. As to quaternary structure, homodimer.

Its subcellular location is the cytoplasm. The catalysed reaction is AMP + diphosphate = 5-phospho-alpha-D-ribose 1-diphosphate + adenine. The protein operates within purine metabolism; AMP biosynthesis via salvage pathway; AMP from adenine: step 1/1. In terms of biological role, catalyzes a salvage reaction resulting in the formation of AMP, that is energically less costly than de novo synthesis. The sequence is that of Adenine phosphoribosyltransferase from Burkholderia mallei (strain NCTC 10229).